Here is a 347-residue protein sequence, read N- to C-terminus: MSDILSSLAYLTGKPVASAKIKAQPEHFQVREDLGFAFTGEGEHLLVRIRKTGENTSFVANELAKACGVKSKDVSWAGLKDRHAVTEQWLSVHLPKGETPDFSAFLAQHPSIEILATDRHNKKLRPGDLVGNEFVVTLSEVTDVADVEQRLEKVKQVGVPNYFGSQRFGNDGNNLEEASRWGRENVRTRNQNKRSMYLSAARSWIFNRIVSARLENGVFDKFIDGDVAQTASGTQLVDASNMAALQAQFAQGEVAITAALAGDNALPTQADALTLEQPFLDEEPDLMALIRGNRMRHDRRDIALKPQDLAWTVDGNNITMTFSLDAGSFATSIVRELVIEEKVEREY.

Residue aspartate 81 is the Nucleophile of the active site. Residues 158–305 form the TRUD domain; sequence GVPNYFGSQR…RHDRRDIALK (148 aa).

Belongs to the pseudouridine synthase TruD family.

The catalysed reaction is uridine(13) in tRNA = pseudouridine(13) in tRNA. Its function is as follows. Responsible for synthesis of pseudouridine from uracil-13 in transfer RNAs. The chain is tRNA pseudouridine synthase D from Vibrio campbellii (strain ATCC BAA-1116).